The chain runs to 252 residues: Imidazole glycerol phosphate synthase subunit HisF (252 aa).

Active-site residues include D11 and D130.

This sequence belongs to the HisA/HisF family. As to quaternary structure, heterodimer of HisH and HisF.

It is found in the cytoplasm. The enzyme catalyses 5-[(5-phospho-1-deoxy-D-ribulos-1-ylimino)methylamino]-1-(5-phospho-beta-D-ribosyl)imidazole-4-carboxamide + L-glutamine = D-erythro-1-(imidazol-4-yl)glycerol 3-phosphate + 5-amino-1-(5-phospho-beta-D-ribosyl)imidazole-4-carboxamide + L-glutamate + H(+). Its pathway is amino-acid biosynthesis; L-histidine biosynthesis; L-histidine from 5-phospho-alpha-D-ribose 1-diphosphate: step 5/9. Its function is as follows. IGPS catalyzes the conversion of PRFAR and glutamine to IGP, AICAR and glutamate. The HisF subunit catalyzes the cyclization activity that produces IGP and AICAR from PRFAR using the ammonia provided by the HisH subunit. This chain is Imidazole glycerol phosphate synthase subunit HisF, found in Geobacillus kaustophilus (strain HTA426).